The chain runs to 91 residues: UPF0335 protein BBta_6866 (91 aa).

Belongs to the UPF0335 family.

The polypeptide is UPF0335 protein BBta_6866 (Bradyrhizobium sp. (strain BTAi1 / ATCC BAA-1182)).